Here is a 222-residue protein sequence, read N- to C-terminus: Cytidylate kinase (222 aa).

Residue 7–15 participates in ATP binding; that stretch reads GPSASGKSS.

Belongs to the cytidylate kinase family. Type 1 subfamily.

Its subcellular location is the cytoplasm. It catalyses the reaction CMP + ATP = CDP + ADP. The enzyme catalyses dCMP + ATP = dCDP + ADP. The sequence is that of Cytidylate kinase from Borrelia turicatae (strain 91E135).